Reading from the N-terminus, the 346-residue chain is Upstream stimulatory factor 2 (346 aa).

Disordered regions lie at residues 1 to 44 (MDML…PGAE) and 215 to 244 (APRT…NEVE). Residues 11–20 (ASSATAAAAA) show a composition bias toward low complexity. A compositionally biased stretch (basic and acidic residues) spans 226 to 244 (DGTRTPRDERRRAQHNEVE). The bHLH domain maps to 235–290 (RRRAQHNEVERRRRDKINNWIVQLSKIIPDCHADNSKTGASKGGILSKACDYIREL). A leucine-zipper region spans residues 307–328 (LQMDNELLRQQIEELKNENALL).

As to quaternary structure, efficient DNA binding requires dimerization with another bHLH protein. Binds DNA as a homodimer or a heterodimer (USF1/USF2). Interacts with MAF.

The protein resides in the nucleus. Functionally, transcription factor that binds to a symmetrical DNA sequence (E-boxes) (5'-CACGTG-3') that is found in a variety of viral and cellular promoters. This Mus musculus (Mouse) protein is Upstream stimulatory factor 2 (Usf2).